The primary structure comprises 100 residues: Small ribosomal subunit protein uS14c (100 aa).

This sequence belongs to the universal ribosomal protein uS14 family. Part of the 30S ribosomal subunit.

It is found in the plastid. It localises to the chloroplast. Its function is as follows. Binds 16S rRNA, required for the assembly of 30S particles. This chain is Small ribosomal subunit protein uS14c, found in Aethionema cordifolium (Lebanon stonecress).